The primary structure comprises 372 residues: NADH-quinone oxidoreductase subunit H (372 aa).

The next 8 helical transmembrane spans lie at 34–54, 106–126, 139–159, 178–198, 217–237, 269–289, 313–333, and 352–372; these read LPLGLLVIAAIPLVFIALYAL, FLFVIGPGVLFVGSFLAFAVL, VGLFYAIGIVALEVVGILAAG, IVSYEIPAAIALLCGAMMAGT, FFLFQSPIAWLPFLIYFIASL, VIFLAEYGSMFMVSAIIAIVF, VWGAFWIIMKGFFFIFVQMWL, and VLTPFAFVSFVLTAIWMIYVP.

It belongs to the complex I subunit 1 family. NDH-1 is composed of 14 different subunits. Subunits NuoA, H, J, K, L, M, N constitute the membrane sector of the complex.

It localises to the cell inner membrane. It carries out the reaction a quinone + NADH + 5 H(+)(in) = a quinol + NAD(+) + 4 H(+)(out). NDH-1 shuttles electrons from NADH, via FMN and iron-sulfur (Fe-S) centers, to quinones in the respiratory chain. The immediate electron acceptor for the enzyme in this species is believed to be ubiquinone. Couples the redox reaction to proton translocation (for every two electrons transferred, four hydrogen ions are translocated across the cytoplasmic membrane), and thus conserves the redox energy in a proton gradient. This subunit may bind ubiquinone. The protein is NADH-quinone oxidoreductase subunit H of Chlorobium luteolum (strain DSM 273 / BCRC 81028 / 2530) (Pelodictyon luteolum).